The following is a 535-amino-acid chain: Alcohol O-acetyltransferase 2 (535 aa).

A membrane association region spans residues 19–36; that stretch reads GHARRMGHLENYFAVLSR. Residues His-189 and Asp-193 each act as charge relay system in the active site. The tract at residues 515–532 is membrane association; it reads RGEWESFCKLFYQTIGEF.

Belongs to the ATF1 alcohol acetyltransferase family.

It localises to the lipid droplet. The protein localises to the endoplasmic reticulum membrane. It carries out the reaction an aliphatic alcohol + acetyl-CoA = an acetyl ester + CoA. Can use acetyl-CoA to synthesize acetate esters from various alcohols, producing ethyl acetate, isoamyl acetate, isobutyl acetate, butyl acetate, hexyl acetate, heptyl acetate and octyl acetate. ATF2 seems to play only a minor role in the acetate ester synthesis, compared to ATF1. Plays an active role in the detoxification hydroxysteroids and possibly certain phytochemicals, in association with the efflux pumps PDR5 and SNQ2. This chain is Alcohol O-acetyltransferase 2, found in Saccharomyces cerevisiae (strain ATCC 204508 / S288c) (Baker's yeast).